Consider the following 1401-residue polypeptide: Enhancer of mRNA-decapping protein 4 (1401 aa).

Ala-2 carries the N-acetylalanine modification. Phosphoserine occurs at positions 3 and 6. Residues Asp-23–Gly-42 form a disordered region. WD repeat units lie at residues Gln-121–Val-164, Ser-167–Leu-206, Ile-217–Leu-269, Lys-287–Ile-326, Arg-335–Thr-385, Thr-389–Val-426, and Tyr-432–Thr-475. Residue Lys-125 is modified to N6-acetyllysine. The segment at Thr-545–Ser-565 is disordered. Residues Ser-560, Ser-565, Ser-583, and Ser-585 each carry the phosphoserine modification. Disordered stretches follow at residues Ala-603–Ser-628 and Asp-662–Thr-702. A compositionally biased stretch (low complexity) spans Thr-609–Ser-628. Residues Gly-663–Ala-675 are compositionally biased toward polar residues. Ser-676 is modified (phosphoserine). Over residues Pro-677–Ala-689 the composition is skewed to low complexity. Position 693 is a phosphothreonine (Thr-693). Phosphoserine is present on residues Ser-708, Ser-723, and Ser-725. Disordered regions lie at residues Leu-717 to Ser-741 and Leu-778 to Pro-808. Positions Ala-722–Ser-741 are enriched in polar residues. Thr-727 bears the Phosphothreonine mark. Phosphoserine is present on residues Ser-729 and Ser-741. Phosphothreonine is present on Thr-821. A phosphoserine mark is found at Ser-844, Ser-871, Ser-875, Ser-879, Ser-887, Ser-890, and Ser-892. The disordered stretch occupies residues Gln-868–Pro-946. The sufficient for nuclear localization stretch occupies residues Gly-913–Met-934. Residues Ile-954–Gln-1025 are a coiled coil. Phosphoserine is present on residues Ser-967 and Ser-1380.

The protein belongs to the WD repeat EDC4 family. In terms of assembly, part of a decapping complex consisting of DCP1A, DCP2, EDC3, EDC4 and probably DDX6. Part of a complex consisting of DCP1A, EDC3, EDC4 and DDX6. Part of a complex consisting of DCP1B, EDC3, EDC4 and DDX6. Interacts with DCP2. Interacts with RC3H1. Interacts with NBDY. Interacts with TEX19. Interacts with LSM14A. Interacts with DDX6. (Microbial infection) Interacts with rotavirus A non-structural protein 2; this interaction probably plays a role in the sequestration of EDC4 in viral factories. Interacts with rotavirus A non-structural protein 5; this interaction probably plays a role in its sequestration in viral factories.

Its subcellular location is the cytoplasm. The protein localises to the P-body. It localises to the nucleus. Functionally, in the process of mRNA degradation, seems to play a role in mRNA decapping. Component of a complex containing DCP2 and DCP1A which functions in decapping of ARE-containing mRNAs. Promotes complex formation between DCP1A and DCP2. Enhances the catalytic activity of DCP2 (in vitro). The protein is Enhancer of mRNA-decapping protein 4 (EDC4) of Homo sapiens (Human).